The chain runs to 482 residues: Probable cytosol aminopeptidase (482 aa).

Mn(2+) is bound by residues Lys251 and Asp256. Lys263 is an active-site residue. Mn(2+)-binding residues include Asp274, Asp333, and Glu335. Arg337 is a catalytic residue.

This sequence belongs to the peptidase M17 family. Mn(2+) serves as cofactor.

It localises to the cytoplasm. It catalyses the reaction Release of an N-terminal amino acid, Xaa-|-Yaa-, in which Xaa is preferably Leu, but may be other amino acids including Pro although not Arg or Lys, and Yaa may be Pro. Amino acid amides and methyl esters are also readily hydrolyzed, but rates on arylamides are exceedingly low.. The enzyme catalyses Release of an N-terminal amino acid, preferentially leucine, but not glutamic or aspartic acids.. Functionally, presumably involved in the processing and regular turnover of intracellular proteins. Catalyzes the removal of unsubstituted N-terminal amino acids from various peptides. The chain is Probable cytosol aminopeptidase from Acinetobacter baylyi (strain ATCC 33305 / BD413 / ADP1).